A 1212-amino-acid polypeptide reads, in one-letter code: Myosin-1 (1212 aa).

A disordered region spans residues 1–35 (MGITRRGKDKAAAGQAVAGGASGGRARPKKATFET). Residues 41-715 (VGVSDLTLLS…TLFALEHMRD (675 aa)) enclose the Myosin motor domain. 134 to 141 (GESGAGKT) provides a ligand contact to ATP. The interval 405–487 (SVGILDIYGF…PGVFSALKDA (83 aa)) is actin-binding. IQ domains follow at residues 719-739 (HNMA…RAES) and 740-765 (ATRI…HGHR). The region spanning 773-962 (RRRMSILGSR…AVHTQQGEPP (190 aa)) is the TH1 domain. 2 disordered regions span residues 947-1064 (DFYK…APPA) and 1115-1212 (PAAY…DDDW). Residues 954 to 966 (VHTQQGEPPNSVS) are compositionally biased toward polar residues. Composition is skewed to low complexity over residues 987-998 (RPGGPNGRPARG) and 1008-1052 (PGGA…ASVR). Residues 1053–1062 (APPPPPPAAP) are compositionally biased toward pro residues. Residues 1065–1124 (KAKIMAKVLYDFAGQKENEMSIKEGDLIEIVQKENNGWWLAKSGNQQAWVPAAYVEEQKQ) form the SH3 domain. Pro residues predominate over residues 1125-1140 (APPPVAASRPPPPAPP). Residues 1171–1190 (MSLNGSDGSRSNTPTPSLGN) are compositionally biased toward polar residues.

The protein belongs to the TRAFAC class myosin-kinesin ATPase superfamily. Myosin family.

The protein localises to the cytoplasm. It is found in the cytoskeleton. Its subcellular location is the actin patch. Type-I myosin implicated in the organization of the actin cytoskeleton. Required for proper actin cytoskeleton polarization. At the cell cortex, assembles in patch-like structures together with proteins from the actin-polymerizing machinery and promotes actin assembly. Functions as actin nucleation-promoting factor (NPF) for the Arp2/3 complex. This chain is Myosin-1 (MYO1), found in Pyricularia oryzae (strain 70-15 / ATCC MYA-4617 / FGSC 8958) (Rice blast fungus).